The primary structure comprises 983 residues: Chaperone protein ClpB3, mitochondrial (983 aa).

The transit peptide at M1–Y87 directs the protein to the mitochondrion. A Clp R domain is found at P97–S240. Repeat regions lie at residues F100–Q165 and I177–S240. The tract at residues L255–P503 is i. G300–T307 contacts ATP. Residues I504–E627 adopt a coiled-coil conformation. Residues V629–S820 form an II region. G703–T710 lines the ATP pocket.

It belongs to the ClpA/ClpB family.

The protein resides in the mitochondrion. Its function is as follows. Molecular chaperone that may not be involved in heat stress response or tolerance. The chain is Chaperone protein ClpB3, mitochondrial (CLPB3) from Oryza sativa subsp. japonica (Rice).